The sequence spans 624 residues: Actin-related protein 8 (624 aa).

An N-acetylmethionine modification is found at methionine 1. The segment covering 1-25 (MTQAEKGDTENGKEKGGEKEKEQRG) has biased composition (basic and acidic residues). Residues 1–29 (MTQAEKGDTENGKEKGGEKEKEQRGVKRP) are disordered. The ATP site is built by serine 55 and threonine 56. Serine 132 carries the phosphoserine modification. 283–286 (DVGD) is a binding site for ATP. Serine 412 bears the Phosphoserine mark. Residues 430–462 (SKQEQSAKATADRKSASKPIGFEGDLRGQSSDL) are disordered.

Belongs to the actin family. ARP8 subfamily. In terms of assembly, component of the chromatin remodeling INO80 complex; specifically part of a complex module associated with the DBINO domain of INO80. Interacts with ACTR5; the interaction is observed in asynchronous (interphase) cells but not in metaphase-arrested cells indicative for a possible dissociation of the INO80 complex in mitotic cells. Exists as monomers and dimers, but the dimer is most probably the biologically relevant form required for stable interactions with histones that exploits the twofold symmetry of the nucleosome core.

It localises to the nucleus. Its subcellular location is the chromosome. Functionally, plays an important role in the functional organization of mitotic chromosomes. Exhibits low basal ATPase activity, and unable to polymerize. In terms of biological role, proposed core component of the chromatin remodeling INO80 complex which is involved in transcriptional regulation, DNA replication and probably DNA repair. Required for the recruitment of INO80 (and probably the INO80 complex) to sites of DNA damage. Strongly prefer nucleosomes and H3-H4 tetramers over H2A-H2B dimers, suggesting it may act as a nucleosome recognition module within the complex. In Homo sapiens (Human), this protein is Actin-related protein 8 (ACTR8).